A 256-amino-acid chain; its full sequence is Homeobox-leucine zipper protein HOX28 (256 aa).

The tract at residues 56–86 (ACSPGSPVSSGSGKRGSGSGSGDEVDDAGCD) is disordered. The segment covering 58–67 (SPGSPVSSGS) has biased composition (low complexity). Residues 91–150 (GARKKLRLSKDQAAVLEECFKTHHTLTPKQKVALAKSLNLRPRQVEVWFQNRRARTKLKQ) constitute a DNA-binding region (homeobox). Residues 149-193 (KQTEVDCEHLKRWCDQLADDNRRLHKELAELRALKATPTPPAAAP) form a leucine-zipper region.

The protein belongs to the HD-ZIP homeobox family. Class II subfamily. Expressed in seedlings, roots, stems and panicles.

The protein resides in the nucleus. Probable transcription factor. This Oryza sativa subsp. indica (Rice) protein is Homeobox-leucine zipper protein HOX28 (HOX28).